Consider the following 265-residue polypeptide: tRNA pseudouridine synthase A (265 aa).

The Nucleophile role is filled by Asp58. Tyr116 provides a ligand contact to substrate.

Belongs to the tRNA pseudouridine synthase TruA family. As to quaternary structure, homodimer.

It carries out the reaction uridine(38/39/40) in tRNA = pseudouridine(38/39/40) in tRNA. Functionally, formation of pseudouridine at positions 38, 39 and 40 in the anticodon stem and loop of transfer RNAs. The chain is tRNA pseudouridine synthase A from Neisseria meningitidis serogroup C / serotype 2a (strain ATCC 700532 / DSM 15464 / FAM18).